Consider the following 757-residue polypeptide: Inhibitor of nuclear factor kappa-B kinase subunit beta (757 aa).

The region spanning 15–300 (WEMKERLGTG…DPQYGPNGCF (286 aa)) is the Protein kinase domain. Residues 21–29 (LGTGGFGNV) and Lys44 each bind ATP. Catalysis depends on Asp145, which acts as the Proton acceptor. A Glycyl lysine isopeptide (Lys-Gly) (interchain with G-Cter in ubiquitin) cross-link involves residue Lys163. Ser177 bears the Phosphoserine; by TBK1 and PKC/PRKCZ mark. The residue at position 179 (Cys179) is an S-nitrosocysteine. Phosphoserine; by TBK1, PKC/PRKCZ and PDPK1 is present on Ser181. The residue at position 191 (Pro191) is a Hydroxyproline. The leucine-zipper stretch occupies residues 458-479 (LLRNNSCLSKMKNAMASTAQQL). Ser670 carries the post-translational modification Phosphoserine; by autocatalysis. Residue Ser672 is modified to Phosphoserine. Residues Ser675, Ser682, Ser689, Ser692, Ser697, Ser705, Ser733, and Ser740 each carry the phosphoserine; by autocatalysis modification. The segment at 683–703 (HPGQLMSQPSSACDSLPESDK) is disordered. Positions 737–742 (LDWSWL) are NEMO-binding.

It belongs to the protein kinase superfamily. Ser/Thr protein kinase family. I-kappa-B kinase subfamily. As to quaternary structure, component of the I-kappa-B-kinase (IKK) core complex consisting of CHUK, IKBKB and IKBKG; probably four alpha/CHUK-beta/IKBKB dimers are associated with four gamma/IKBKG subunits. The IKK core complex seems to associate with regulatory or adapter proteins to form a IKK-signalosome holo-complex. The IKK complex associates with TERF2IP/RAP1, leading to promote IKK-mediated phosphorylation of RELA/p65. Part of a complex composed of NCOA2, NCOA3, CHUK/IKKA, IKBKB, IKBKG and CREBBP. Part of a 70-90 kDa complex at least consisting of CHUK/IKKA, IKBKB, NFKBIA, RELA, ELP1 and MAP3K14. Found in a membrane raft complex, at least composed of BCL10, CARD11, DPP4 and IKBKB. Interacts with SQSTM1 through PRKCZ or PRKCI. Forms an NGF-induced complex with IKBKB, PRKCI and TRAF6. May interact with MAVS/IPS1. Interacts with NALP2. Interacts with TICAM1. Interacts with FAF1; the interaction disrupts the IKK complex formation. Interacts with ATM. Part of a ternary complex consisting of TANK, IKBKB and IKBKG. Interacts with NIBP; the interaction is direct. Interacts with ARRB1 and ARRB2. Interacts with TRIM21. Interacts with NLRC5; prevents IKBKB phosphorylation and kinase activity. Interacts with PDPK1. Interacts with EIF2AK2/PKR. The phosphorylated form interacts with PPM1A and PPM1B. Interacts with ZNF268 isoform 2; the interaction is further increased in a TNF-alpha-dependent manner. Interacts with IKBKE. Interacts with ZC3H12A. Interacts with AKAP13. Interacts with LRRC14; disrupts IKBKB-IKBKG interaction preventing I-kappa-B-kinase (IKK) core complex formation and leading to a decrease of IKBKB phosphorylation and NF-kappaB activation. Interacts with SASH1. Interacts with ARFIP2. Interacts with FKBP5. Interacts with kinase TBK1; the complex interacts with STAT1, leading to phosphorylation of STAT1 on 'Thr-748' by IKBKB. In terms of processing, upon cytokine stimulation, phosphorylated on Ser-177 and Ser-181 by MEKK1 and/or MAP3K14/NIK as well as TBK1 and PRKCZ; which enhances activity. Phosphorylated by MAP3K7/TAK1 in response to NOD1 and NOD2 signaling, promoting activation and phosphorylation of NF-kappa-B inhibitors, leading to NF-kappa-B activation. Once activated, autophosphorylates on the C-terminal serine cluster; which decreases activity and prevents prolonged activation of the inflammatory response. Phosphorylated by the IKK-related kinases TBK1 and IKBKE, which is associated with reduced CHUK/IKKA and IKBKB activity and NF-kappa-B-dependent gene transcription. Dephosphorylated at Ser-177 and Ser-181 by PPM1A and PPM1B. Post-translationally, ubiquitinated. Monoubiquitination involves TRIM21 that leads to inhibition of Tax-induced NF-kappa-B signaling. 'Ser-163' may not serve as a monoubiquitination site. Ubiquitination on 'Ser-163' may modulate phosphorylation on C-terminal serine residues. Hydroxylated by PHD1/EGLN2, loss of hydroxylation under hypoxic conditions results in activation of NF-kappa-B. In terms of tissue distribution, detected in heart (at protein level). Expressed in liver, kidney and spleen.

The protein resides in the cytoplasm. The protein localises to the nucleus. It is found in the membrane raft. It carries out the reaction L-seryl-[I-kappa-B protein] + ATP = O-phospho-L-seryl-[I-kappa-B protein] + ADP + H(+). The catalysed reaction is L-seryl-[protein] + ATP = O-phospho-L-seryl-[protein] + ADP + H(+). The enzyme catalyses L-threonyl-[protein] + ATP = O-phospho-L-threonyl-[protein] + ADP + H(+). Serine kinase that plays an essential role in the NF-kappa-B signaling pathway which is activated by multiple stimuli such as inflammatory cytokines, bacterial or viral products, DNA damages or other cellular stresses. Acts as a part of the canonical IKK complex in the conventional pathway of NF-kappa-B activation. Phosphorylates inhibitors of NF-kappa-B on 2 critical serine residues. These modifications allow polyubiquitination of the inhibitors and subsequent degradation by the proteasome. In turn, free NF-kappa-B is translocated into the nucleus and activates the transcription of hundreds of genes involved in immune response, growth control, or protection against apoptosis. In addition to the NF-kappa-B inhibitors, phosphorylates several other components of the signaling pathway including NEMO/IKBKG, NF-kappa-B subunits RELA and NFKB1, as well as IKK-related kinases TBK1 and IKBKE. IKK-related kinase phosphorylations may prevent the overproduction of inflammatory mediators since they exert a negative regulation on canonical IKKs. Phosphorylates FOXO3, mediating the TNF-dependent inactivation of this pro-apoptotic transcription factor. Also phosphorylates other substrates including NAA10, NCOA3, BCL10 and IRS1. Phosphorylates RIPK1 at 'Ser-25' which represses its kinase activity and consequently prevents TNF-mediated RIPK1-dependent cell death. Phosphorylates the C-terminus of IRF5, stimulating IRF5 homodimerization and translocation into the nucleus. Following bacterial lipopolysaccharide (LPS)-induced TLR4 endocytosis, phosphorylates STAT1 at 'Thr-748' which restricts interferon signaling and anti-inflammatory responses and promotes innate inflammatory responses. IKBKB-mediated phosphorylation of STAT1 at 'Thr-748' promotes binding of STAT1 to the ARID5A promoter, resulting in transcriptional activation of ARID5A and subsequent ARID5A-mediated stabilization of IL6. It also promotes binding of STAT1 to the IL12B promoter and activation of IL12B transcription. This Mus musculus (Mouse) protein is Inhibitor of nuclear factor kappa-B kinase subunit beta (Ikbkb).